The following is a 539-amino-acid chain: Nucleoporin NUP60 (539 aa).

Phosphoserine occurs at positions 10, 49, 81, and 89. Positions 44–80 (DSARVSPRNNVANKQPRNESFNRRISSMPGGYFHSEI) are disordered. Positions 91–118 (VVSAVGEARNDIENKEEEYDETHETNIS) form a coiled coil. Residues Ser162, Ser171, Ser214, and Ser222 each carry the phosphoserine modification. Composition is skewed to polar residues over residues 242-252 (TANTSAQSIAS) and 258-267 (SGVSKSAPSK). Disordered stretches follow at residues 242 to 267 (TANTSAQSIASAKSVRSGVSKSAPSK), 305 to 329 (IRKHKRVSPNAAPRQEISEEETTVK), and 347 to 493 (NATK…GKHI). Residues 347-359 (NATKISPSAPSKD) are compositionally biased toward polar residues. Phosphoserine is present on residues Ser352, Ser360, Ser374, and Ser382. 2 stretches are compositionally biased toward polar residues: residues 395-433 (SAFNFSFNTSRNVEPTENAYKSENAPSASSKEFNFTNLQ) and 448-485 (GDSTPVQPDLSVTPQKSSSKGFVFNSVQKKSRSNLSQE). 2 FXF repeats span residues 399–401 (FSF) and 427–429 (FNF). Thr460 carries the phosphothreonine modification. The stretch at 469-471 (FVF) is one FXF 3 repeat. 2 positions are modified to phosphoserine: Ser480 and Ser483. Residues 509 to 511 (FDF) form an FXF 4 repeat.

In terms of assembly, component of the nuclear pore complex (NPC). NPC constitutes the exclusive means of nucleocytoplasmic transport. NPCs allow the passive diffusion of ions and small molecules and the active, nuclear transport receptor-mediated bidirectional transport of macromolecules such as proteins, RNAs, ribonucleoparticles (RNPs), and ribosomal subunits across the nuclear envelope. Due to its 8-fold rotational symmetry, all subunits are present with 8 copies or multiples thereof. Binds to NUP1 and NUP2 forming the nuclear basket and the distal ring. The interaction with NUP2 is GSP1-GTP-dependent. Interacts through its FG repeats with karyopherins, such as KAP123 and KAP95-SRP1 (KAP60). Also interacts with GSP1-GTP and SRM1 (PRP20), where NUP60 reduces SRM1 activity, thus inhibiting GSP1 guanine nucleotide dissociation. Post-translationally, phosphorylated by CDC28.

It is found in the nucleus. The protein localises to the nuclear pore complex. Its subcellular location is the nucleus membrane. Functionally, functions as a component of the nuclear pore complex (NPC). NPC components, collectively referred to as nucleoporins (NUPs), can play the role of both NPC structural components and of docking or interaction partners for transiently associated nuclear transport factors. Active directional transport is assured by both, a Phe-Gly (FG) repeat affinity gradient for these transport factors across the NPC and a transport cofactor concentration gradient across the nuclear envelope (GSP1 and GSP2 GTPases associated predominantly with GTP in the nucleus, with GDP in the cytoplasm). This Saccharomyces cerevisiae (strain ATCC 204508 / S288c) (Baker's yeast) protein is Nucleoporin NUP60 (NUP60).